A 298-amino-acid chain; its full sequence is Probable endonuclease 4 (298 aa).

Residues His69, His111, Glu146, Asp180, His183, His215, Asp228, His230, and Glu260 each contribute to the Zn(2+) site.

The protein belongs to the AP endonuclease 2 family. Requires Zn(2+) as cofactor.

It carries out the reaction Endonucleolytic cleavage to 5'-phosphooligonucleotide end-products.. In terms of biological role, endonuclease IV plays a role in DNA repair. It cleaves phosphodiester bonds at apurinic or apyrimidinic (AP) sites, generating a 3'-hydroxyl group and a 5'-terminal sugar phosphate. The chain is Probable endonuclease 4 from Bacillus anthracis (strain A0248).